The following is a 505-amino-acid chain: AAA-ATPase At5g17760 (505 aa).

The helical transmembrane segment at 11-27 (TSVFTAYASMAGYMMMI) threads the bilayer. The tract at residues 136-155 (GGGGGVGGRGGGGGRRGGMD) is disordered. The segment covering 137–151 (GGGGVGGRGGGGGRR) has biased composition (gly residues). 260–267 (GPPGTGKS) provides a ligand contact to ATP.

It belongs to the AAA ATPase family. BCS1 subfamily. Mg(2+) serves as cofactor.

It is found in the membrane. It catalyses the reaction ATP + H2O = ADP + phosphate + H(+). In Arabidopsis thaliana (Mouse-ear cress), this protein is AAA-ATPase At5g17760.